The following is a 564-amino-acid chain: MVLYIILAIIVIILIAVGVLFYLRSNKRQIIEKAIERKNEIETLPFDQNLAQLFKLNLKGETKTKYDAMKKDTVESTNKYLAPVEEKIHNAEALLDKFSFNASQSEIDDANELMDSYEQSYQQQLEDVNEIIALYKDNDELYDKCKVDYREMKRDVLANRHQFGEAASLLETEIEKFEPRLEQYEVLKADGNYVQAHNHIAALNEQMKQLRSYMEEIPELIRETQKELPGQFQDLKYGCRDLKVEGYDLDHVKVDSTLQSLKTELSFVEPLISRLELEEANDKLANINDKLDDMYDLIEHEVKAKNDVEETKDIITDNLFKAKDMNYTLQTEIEYVRENYYINESDAQSVRQFENEIQSLISVYDDILKEMSKSAVRYSEVQDNLQYLEDHVTVINDKQEKLQNHLIQLREDEAEAEDNLLRVQSKKEEVYRRLLASNLTSVPERFIIMKNEIDHEVRDVNEQFSERPIHVKQLKDKVSKIVIQMNTFEDEANDVLVNAVYAEKLIQYGNRYRKDYSNVDKSLNEAERLFKNNRYKRAIEIAEQALESVEPGVTKHIEEEVIKQ.

At 1 to 4 (MVLY) the chain is on the extracellular side. Residues 5–23 (IILAIIVIILIAVGVLFYL) traverse the membrane as a helical segment. Residues 24–564 (RSNKRQIIEK…KHIEEEVIKQ (541 aa)) are Cytoplasmic-facing. Coiled-coil stretches lie at residues 99–138 (SFNA…YKDN), 190–223 (DGNY…LIRE), 271–300 (LISR…LIEH), 350–435 (VRQF…RRLL), and 471–550 (VKQL…ESVE).

The protein belongs to the EzrA family.

The protein resides in the cell membrane. Its function is as follows. Negative regulator of FtsZ ring formation; modulates the frequency and position of FtsZ ring formation. Inhibits FtsZ ring formation at polar sites. Interacts either with FtsZ or with one of its binding partners to promote depolymerization. In Staphylococcus aureus (strain NCTC 8325 / PS 47), this protein is Septation ring formation regulator EzrA.